A 440-amino-acid chain; its full sequence is Glycerophosphocholine cholinephosphodiesterase ENPP6 (440 aa).

A signal peptide spans 1 to 22 (MAVKLGTLLLALALGLAQPASA). Substrate-binding residues include Asp-32, Ser-71, and Asn-92. Zn(2+) is bound by residues Asp-32 and Ser-71. The active-site Nucleophile is Ser-71. At Ser-71 the chain carries Phosphoserine. N-linked (GlcNAc...) asparagine glycosylation is found at Asn-100 and Asn-118. A disulfide bridge links Cys-142 with Cys-154. Asp-193 is a binding site for substrate. 4 residues coordinate Zn(2+): Asp-193, His-197, Asp-240, and His-241. His-241 is a substrate binding site. The N-linked (GlcNAc...) asparagine glycan is linked to Asn-341. His-354 serves as a coordination point for substrate. His-354 lines the Zn(2+) pocket. The N-linked (GlcNAc...) asparagine glycan is linked to Asn-404. Ser-419 carries the GPI-anchor amidated serine lipid modification. A propeptide spans 420–440 (TAPPVWPSHCALALILLFLLA) (removed in mature form).

Belongs to the nucleotide pyrophosphatase/phosphodiesterase family. Homodimer; disulfide-linked. Homotetramer. Requires Zn(2+) as cofactor. As to expression, predominantly expressed in kidney and brain. In the kidney, expressed specifically in the proximal tubules and thin descending limbs of Henle (at protein level).

It localises to the cell membrane. The enzyme catalyses sn-glycerol 3-phosphocholine + H2O = phosphocholine + glycerol + H(+). It carries out the reaction a 1-acyl-sn-glycero-3-phosphocholine + H2O = a 1-acyl-sn-glycerol + phosphocholine + H(+). The catalysed reaction is a 1-O-alkyl-sn-glycero-3-phosphocholine + H2O = a 1-O-alkyl-sn-glycerol + phosphocholine + H(+). It catalyses the reaction 1-dodecanoyl-sn-glycero-3-phosphocholine + H2O = 1-dodecanoyl-sn-glycerol + phosphocholine + H(+). The enzyme catalyses 1-hexadecanoyl-sn-glycero-3-phosphocholine + H2O = 1-hexadecanoyl-sn-glycerol + phosphocholine + H(+). It carries out the reaction 1-(5Z,8Z,11Z,14Z-eicosatetraenoyl)-sn-glycero-3-phosphocholine + H2O = 1-(5Z,8Z,11Z,14Z-eicosatetraenoyl)-sn-glycerol + phosphocholine + H(+). The catalysed reaction is 1-tetradecanoyl-sn-glycero-3-phosphocholine + H2O = 1-tetradecanoyl-sn-glycerol + phosphocholine + H(+). It catalyses the reaction sphing-4-enine-phosphocholine + H2O = sphing-4-enine + phosphocholine + H(+). The enzyme catalyses 1-(9Z-octadecenoyl)-sn-glycero-3-phosphocholine + H2O = 1-(9Z-octadecenoyl)-sn-glycerol + phosphocholine + H(+). It carries out the reaction 1-(9Z,12Z)-octadecadienoyl-sn-glycero-3-phosphocholine + H2O = 1-(9Z,12Z-octadecadienoyl)-sn-glycerol + phosphocholine + H(+). The catalysed reaction is glycero-2-phosphocholine + H2O = phosphocholine + glycerol + H(+). Inhibited by EDTA and EGTA in vitro. Its function is as follows. Choline-specific glycerophosphodiesterase that hydrolyzes glycerophosphocholine (GPC) and lysophosphatidylcholine (LPC) and contributes to supplying choline to the cells. Has a preference for LPC with short (12:0 and 14:0) or polyunsaturated (18:2 and 20:4) fatty acids. In vitro, hydrolyzes only choline-containing lysophospholipids, such as sphingosylphosphorylcholine (SPC), platelet-activating factor (PAF) and lysoPAF, but not other lysophospholipids. This chain is Glycerophosphocholine cholinephosphodiesterase ENPP6, found in Homo sapiens (Human).